We begin with the raw amino-acid sequence, 329 residues long: Red chlorophyll catabolite reductase 1, chloroplastic (329 aa).

The span at 1-11 (MLQLRSPPPAT) shows a compositional bias: pro residues. A chloroplast-targeting transit peptide spans 1 to 50 (MLQLRSPPPATSSPSSAVSFPTLAPRLLPLRRRRRGAGSQLGGKTSSAVR). The tract at residues 1-61 (MLQLRSPPPA…SSAAAPGATE (61 aa)) is disordered. Composition is skewed to low complexity over residues 12 to 28 (SSPSSAVSFPTLAPRLL) and 46 to 59 (SSAVRASSAAAPGA). Red chlorophyll catabolite contacts are provided by residues Glu163, 216–218 (YRS), and Asp299.

As to expression, expressed in leaves. Expressed at low levels in roots, stems, panicles and seeds.

It localises to the plastid. The protein resides in the chloroplast. The catalysed reaction is primary fluorescent chlorophyll catabolite + 2 oxidized [2Fe-2S]-[ferredoxin] = red chlorophyll catabolite + 2 reduced [2Fe-2S]-[ferredoxin] + 3 H(+). It functions in the pathway porphyrin-containing compound metabolism; chlorophyll degradation. Catalyzes the key reaction of chlorophyll catabolism, porphyrin macrocycle cleavage of pheophorbide a (pheide a) to a primary fluorescent catabolite (pFCC). Works in a two-step reaction with pheophorbide a oxygenase (PaO) by reducing the C20/C1 double bond of the intermediate, RCC. Belongs to the chlorophyll catabolic enzymes (CCEs). May play a role in senescence and response to wounding. This Oryza sativa subsp. japonica (Rice) protein is Red chlorophyll catabolite reductase 1, chloroplastic.